We begin with the raw amino-acid sequence, 194 residues long: Thioredoxin O1, mitochondrial (194 aa).

A mitochondrion-targeting transit peptide spans 1-42 (MKGNWSIVRKVLHRQFSTLRSSTPSSRLSTSIRPLVLAPNSI). Ser-75 carries the phosphoserine modification. The region spanning 89-194 (VKSEEEFINA…LKNLMEQLYK (106 aa)) is the Thioredoxin domain. Residues Cys-118 and Cys-121 each act as nucleophile in the active site. A disulfide bridge connects residues Cys-118 and Cys-121.

It belongs to the thioredoxin family. Plant O-type subfamily.

Its subcellular location is the mitochondrion matrix. Thiol-disulfide oxidoreductase that may participate in various redox reactions. Possesses insulin disulfide bonds reducing activity. Reduced by thioredoxin reductases NTRA and NTRB. The polypeptide is Thioredoxin O1, mitochondrial (Arabidopsis thaliana (Mouse-ear cress)).